A 502-amino-acid chain; its full sequence is Potassium channel KAT3 (502 aa).

Topologically, residues 1-67 (MPRSSRMNLW…PYDPRYKVWE (67 aa)) are cytoplasmic. A helical membrane pass occupies residues 68–88 (TFLIILVVYSAWICPLEFAFL). Residues 89 to 95 (RYLPSAP) lie on the Extracellular side of the membrane. Residues 96–116 (FVVDDVVNGFFAVDIMLTFFV) form a helical membrane-spanning segment. Residues 117 to 138 (PFVDKKSYLLVNDPKKIAVRYL) are Cytoplasmic-facing. A helical membrane pass occupies residues 139 to 159 (SSWFVFDVCSTVPFHSISLLF). Residues 160-169 (NEHGHDLGFK) are Extracellular-facing. The chain crosses the membrane as a helical; Voltage-sensor span at residues 170-190 (FLNVLRLWRLRRVSSMFARLE). Residues 191–204 (KDIRFNYAVIRCTK) lie on the Cytoplasmic side of the membrane. A helical transmembrane segment spans residues 205 to 225 (LISVTLFAIHCAGCINYLIAD). The Extracellular segment spans residues 226–252 (RYPDPRRTWIGAVMPNFREDGLWIRYV). Positions 253-272 (TAMYWSITTLTTTGYGDLHA) form an intramembrane region, pore-forming. The Extracellular segment spans residues 273–276 (ENAR). The chain crosses the membrane as a helical span at residues 277–297 (EMLFGICYMLFNLWLTAYLIG). Residues 298 to 502 (NMTNLVVHST…IRSNLQQVNV (205 aa)) are Cytoplasmic-facing. 381–500 (LFKGVSSRFI…DIIRSNLQQV (120 aa)) serves as a coordination point for a nucleoside 3',5'-cyclic phosphate.

The protein belongs to the potassium channel family. Plant (TC 1.A.1.4) subfamily.

It is found in the membrane. Probable inward-rectifying potassium channel. Assuming opened or closed conformations in response to the voltage difference across the membrane, the channel is activated by hyperpolarization. In Oryza sativa subsp. japonica (Rice), this protein is Potassium channel KAT3.